A 252-amino-acid polypeptide reads, in one-letter code: NAD-dependent protein deacetylase (252 aa).

The Deacetylase sirtuin-type domain occupies 1 to 248 (MYLVEEAKKV…PEVISHIQSL (248 aa)). NAD(+) contacts are provided by A26, T30, F37, R38, Q102, V104, D105, and H120. F37 is a binding site for nicotinamide. Nicotinamide-binding residues include V104 and D105. H120 serves as the catalytic Proton acceptor. Zn(2+) is bound by residues C128, C131, C153, and C155. The NAD(+) site is built by S191, S192, N216, and I234.

The protein belongs to the sirtuin family. Class U subfamily. The cofactor is Zn(2+).

It localises to the cytoplasm. The catalysed reaction is N(6)-acetyl-L-lysyl-[protein] + NAD(+) + H2O = 2''-O-acetyl-ADP-D-ribose + nicotinamide + L-lysyl-[protein]. Its function is as follows. NAD-dependent protein deacetylase which modulates the activities of several enzymes which are inactive in their acetylated form. Deacetylates the N-terminal lysine residue of Alba, the major archaeal chromatin protein and that, in turn, increases Alba's DNA binding affinity, thereby repressing transcription. The chain is NAD-dependent protein deacetylase from Sulfolobus acidocaldarius (strain ATCC 33909 / DSM 639 / JCM 8929 / NBRC 15157 / NCIMB 11770).